A 376-amino-acid chain; its full sequence is MSQRDYYEVLGVARDASEDDIKRAYRKLALQYHPDRNPDDPEAEQKFKEAAEAYDVLRDGEKRARYDRFGHAGVGNGGGFGQGFSSNEDIFAHFSDIFGDLFGFAGAAGGRSRGPRPQAGSDLRYNLTISFRQAAKGDEVTLRLPKSVPCDECGGSGAAPGTRPETCRHCGGAGQIRQSQGFFQIAMPCPVCRGEGTVITSPCPKCKGSGQTQQVKELSVRIPAGVDTGNRLRLRGEGEPGIHGGPAGDLYVVISVEDDKTFRRQGQDLVVTREISFVQASLGDRIDVPTLDDDITLDIPAGTQSGEVFRLVDKGLPYLGHGHTGDLLVEIRVVTPTRLTKKQEELLREFALLDEEKPLEKVKKMARKIGKAMGMD.

Residues 5–70 (DYYEVLGVAR…EKRARYDRFG (66 aa)) enclose the J domain. The CR-type zinc-finger motif lies at 137 to 215 (GDEVTLRLPK…CKGSGQTQQV (79 aa)). Cys-150, Cys-153, Cys-167, Cys-170, Cys-189, Cys-192, Cys-203, and Cys-206 together coordinate Zn(2+). 4 CXXCXGXG motif repeats span residues 150–157 (CDECGGSG), 167–174 (CRHCGGAG), 189–196 (CPVCRGEG), and 203–210 (CPKCKGSG).

This sequence belongs to the DnaJ family. In terms of assembly, homodimer. Zn(2+) serves as cofactor.

It localises to the cytoplasm. In terms of biological role, participates actively in the response to hyperosmotic and heat shock by preventing the aggregation of stress-denatured proteins and by disaggregating proteins, also in an autonomous, DnaK-independent fashion. Unfolded proteins bind initially to DnaJ; upon interaction with the DnaJ-bound protein, DnaK hydrolyzes its bound ATP, resulting in the formation of a stable complex. GrpE releases ADP from DnaK; ATP binding to DnaK triggers the release of the substrate protein, thus completing the reaction cycle. Several rounds of ATP-dependent interactions between DnaJ, DnaK and GrpE are required for fully efficient folding. Also involved, together with DnaK and GrpE, in the DNA replication of plasmids through activation of initiation proteins. The chain is Chaperone protein DnaJ from Nitratidesulfovibrio vulgaris (strain ATCC 29579 / DSM 644 / CCUG 34227 / NCIMB 8303 / VKM B-1760 / Hildenborough) (Desulfovibrio vulgaris).